The sequence spans 518 residues: Bifunctional purine biosynthesis protein PurH (518 aa).

Residues 1–144 form the MGS-like domain; it reads MSKRALISVS…KNHASVTVVC (144 aa).

The protein belongs to the PurH family.

The enzyme catalyses (6R)-10-formyltetrahydrofolate + 5-amino-1-(5-phospho-beta-D-ribosyl)imidazole-4-carboxamide = 5-formamido-1-(5-phospho-D-ribosyl)imidazole-4-carboxamide + (6S)-5,6,7,8-tetrahydrofolate. It carries out the reaction IMP + H2O = 5-formamido-1-(5-phospho-D-ribosyl)imidazole-4-carboxamide. It participates in purine metabolism; IMP biosynthesis via de novo pathway; 5-formamido-1-(5-phospho-D-ribosyl)imidazole-4-carboxamide from 5-amino-1-(5-phospho-D-ribosyl)imidazole-4-carboxamide (10-formyl THF route): step 1/1. The protein operates within purine metabolism; IMP biosynthesis via de novo pathway; IMP from 5-formamido-1-(5-phospho-D-ribosyl)imidazole-4-carboxamide: step 1/1. The chain is Bifunctional purine biosynthesis protein PurH from Lactococcus lactis subsp. lactis (strain IL1403) (Streptococcus lactis).